A 113-amino-acid polypeptide reads, in one-letter code: UPF0342 protein MGAS2096_Spy0691 (113 aa).

Belongs to the UPF0342 family.

In Streptococcus pyogenes serotype M12 (strain MGAS2096), this protein is UPF0342 protein MGAS2096_Spy0691.